The primary structure comprises 178 residues: Fatty-acid and retinol-binding protein 1 (178 aa).

A signal peptide spans 1-16 (MYHQLILMALIGVIMA). 2 coiled-coil regions span residues 67–89 (DAAL…ELRN) and 122–154 (QKLD…LKAT).

It belongs to the fatty-acid and retinol-binding protein (FARBP) family. Post-translationally, not glycosylated.

The protein resides in the secreted. In terms of biological role, binds retinol and different fatty acids. This Litomosoides sigmodontis (Filarial nematode worm) protein is Fatty-acid and retinol-binding protein 1.